The primary structure comprises 562 residues: Pentatricopeptide repeat-containing protein At3g22670, mitochondrial (562 aa).

A mitochondrion-targeting transit peptide spans 1-31 (MLTKLRISKLVSYTLPRRIFQRRFLVTNNTA). 10 PPR repeats span residues 165–199 (SGHTYNAMVDVLGKCRNFDLMWELVNEMNKNEESK), 202–232 (TLDTMSKVMRRLAKSGKYNKAVDAFLEMEKS), 238–268 (DTIAMNSLMDALVKENSIEHAHEVFLKLFDT), 272–306 (DARTFNILIHGFCKARKFDDARAMMDLMKVTEFTP), 307–341 (DVVTYTSFVEAYCKEGDFRRVNEMLEEMRENGCNP), 342–376 (NVVTYTIVMHSLGKSKQVAEALGVYEKMKEDGCVP), 377–411 (DAKFYSSLIHILSKTGRFKDAAEIFEDMTNQGVRR), 412–446 (DVLVYNTMISAALHHSRDEMALRLLKRMEDEEGES), 450–484 (NVETYAPLLKMCCHKKKMKLLGILLHHMVKNDVSI), and 485–519 (DVSTYILLIRGLCMSGKVEEACLFFEEAVRKGMVP).

This sequence belongs to the PPR family. P subfamily.

It is found in the mitochondrion. In Arabidopsis thaliana (Mouse-ear cress), this protein is Pentatricopeptide repeat-containing protein At3g22670, mitochondrial.